The chain runs to 929 residues: Chitin synthase 1 (929 aa).

The span at 1 to 12 (MAYRGAGGPGGG) shows a compositional bias: gly residues. Disordered stretches follow at residues 1-43 (MAYR…QEDE) and 114-156 (MGGH…GGGL). Composition is skewed to polar residues over residues 21–33 (QDLN…SNVQ) and 140–149 (SWVQRQNPNA). N-linked (GlcNAc...) asparagine glycosylation occurs at Asn-560. Transmembrane regions (helical) follow at residues 587-607 (FFFH…WFSL), 643-663 (LFNA…FILA), 678-698 (SFFV…YLVV), 730-750 (VILL…FMYL), and 758-778 (SFPY…VYAF). The N-linked (GlcNAc...) asparagine glycan is linked to Asn-801. Transmembrane regions (helical) follow at residues 857-877 (TMLV…ITSD) and 897-917 (FLLF…LWFL).

This sequence belongs to the chitin synthase family. Class III subfamily.

It localises to the cell membrane. It carries out the reaction [(1-&gt;4)-N-acetyl-beta-D-glucosaminyl](n) + UDP-N-acetyl-alpha-D-glucosamine = [(1-&gt;4)-N-acetyl-beta-D-glucosaminyl](n+1) + UDP + H(+). Functionally, polymerizes chitin, a structural polymer of the cell wall and septum, by transferring the sugar moiety of UDP-GlcNAc to the non-reducing end of the growing chitin polymer. CHS1 and CHS3 have compensatory functions in cell wall modifications in responses to stresses. Involved in appressoria formation and required for full virulence. The chain is Chitin synthase 1 from Pyricularia oryzae (strain 70-15 / ATCC MYA-4617 / FGSC 8958) (Rice blast fungus).